Consider the following 99-residue polypeptide: Acylphosphatase-2 (99 aa).

S2 bears the N-acetylserine mark. In terms of domain architecture, Acylphosphatase-like spans S9 to Y99. Catalysis depends on residues R24 and N42. At S93 the chain carries Phosphoserine.

This sequence belongs to the acylphosphatase family.

It catalyses the reaction an acyl phosphate + H2O = a carboxylate + phosphate + H(+). Its function is as follows. Its physiological role is not yet clear. This Homo sapiens (Human) protein is Acylphosphatase-2 (ACYP2).